The primary structure comprises 58 residues: MTGSGTPSQGKKNKTVHVKCRRCGEKSYHVKKERCSSCGFGDSASRRGYAWQSKSGDN.

Cysteine 20, cysteine 23, cysteine 35, and cysteine 38 together coordinate Zn(2+). The C4-type zinc-finger motif lies at 20-38 (CRRCGEKSYHVKKERCSSC). The segment at 39–58 (GFGDSASRRGYAWQSKSGDN) is disordered.

The protein belongs to the eukaryotic ribosomal protein eL37 family. Zn(2+) is required as a cofactor.

Its function is as follows. Binds to the 23S rRNA. This Halorubrum lacusprofundi (strain ATCC 49239 / DSM 5036 / JCM 8891 / ACAM 34) protein is Large ribosomal subunit protein eL37.